The following is a 336-amino-acid chain: Glycerol-3-phosphate dehydrogenase [NAD(P)+] (336 aa).

5 residues coordinate NADPH: Ser-11, Trp-12, Arg-32, Arg-33, and Lys-110. Sn-glycerol 3-phosphate-binding residues include Lys-110 and Gly-140. Ala-144 contributes to the NADPH binding site. Sn-glycerol 3-phosphate-binding residues include Lys-195, Asp-248, Ser-258, Arg-259, and Asn-260. Lys-195 functions as the Proton acceptor in the catalytic mechanism. Residue Arg-259 participates in NADPH binding. The NADPH site is built by Val-284 and Glu-286.

This sequence belongs to the NAD-dependent glycerol-3-phosphate dehydrogenase family.

The protein localises to the cytoplasm. It carries out the reaction sn-glycerol 3-phosphate + NAD(+) = dihydroxyacetone phosphate + NADH + H(+). It catalyses the reaction sn-glycerol 3-phosphate + NADP(+) = dihydroxyacetone phosphate + NADPH + H(+). The protein operates within membrane lipid metabolism; glycerophospholipid metabolism. Catalyzes the reduction of the glycolytic intermediate dihydroxyacetone phosphate (DHAP) to sn-glycerol 3-phosphate (G3P), the key precursor for phospholipid synthesis. The polypeptide is Glycerol-3-phosphate dehydrogenase [NAD(P)+] (Nocardia farcinica (strain IFM 10152)).